The primary structure comprises 833 residues: MTFYNHKAIEPKWQAFWADNHTFKTGTDASKPKFYALDMFPYPSGAGLHVGHPEGYTATDILSRFKRAQGYNVLHPMGWDAFGLPAEQYAMDTGNDPAEFTAENIANFKRQINALGFSYDWDREINTTDPSYYKWTQWIFTKLYEKGLAYEAEVPVNWVEELGTAIANEEVLPDGTSERGGYPVVRKPMRQWMLKITAYAERLLADLEEVDWPESIKDMQRNWIGKSTGANVTFKVKDTDKDFTVFTTRPDTLFGATYAVLAPEHALVDSITTAEQAQAVAEYKRQASLKSDLARTDLAKEKTGVWTGAYAINPVNGKEMPIWIADYVLASYGTGAIMAVPAHDERDWAFAKQFNLEIIPVLEGGNVDEAAYTEDGIHINSDFLDGLDKACAIAKMVAWLEETGVGHEKVSYRLRDWLFSRQRYWGEPIPIIHWEDGTSTAVPEQDLPLVLPVTKDIRPSGTGESPLANLTDWLEVTREDGVKGRRETNTMPQWAGSSWYYLRYIDPHNDEQLADKDLLKQWLPVDIYIGGAEHAVLHLLYARFWHKVLYDLGVVPTKEPFQKLFNQGMILGTSYRDHRGALVATDKVDKRDGSFFHMETGEELEQAPAKMSKSLKNVVNPDDVVEQYGADTLRVYEMFMGPLDASIAWSEEGLEGARKFLDRVYRLITTKEIVAENSGALDKAYHETVKAVTEQIEGMKFNTAIAQLMIFVNAANKEDELYVAYAKGFVQLLAPFAPHLGEELWQILTASGQSISYVAWPTHDDSKLVENDVEIVVQIKGKVKAKLVVAKDLSREELEKVALAHDKIQAEIAGKEVAKVIVVPNKLVNIVVK.

The 'HIGH' region signature appears at 41–52 (PYPSGAGLHVGH). Residues 610–614 (KMSKS) carry the 'KMSKS' region motif. K613 contributes to the ATP binding site.

It belongs to the class-I aminoacyl-tRNA synthetase family.

The protein resides in the cytoplasm. The enzyme catalyses tRNA(Leu) + L-leucine + ATP = L-leucyl-tRNA(Leu) + AMP + diphosphate. This chain is Leucine--tRNA ligase, found in Streptococcus equi subsp. equi (strain 4047).